The primary structure comprises 65 residues: Neurotoxin BmK AGAP-SYPU2 (65 aa).

The region spanning 2 to 64 (KDGYIVDDKN…VPIRVPGRCN (63 aa)) is the LCN-type CS-alpha/beta domain. Intrachain disulfides connect C12–C63, C16–C36, C22–C46, and C26–C48.

In terms of tissue distribution, expressed by the venom gland.

The protein localises to the secreted. Its function is as follows. Alpha toxins bind voltage-independently at site-3 of sodium channels and inhibit the inactivation of the activated channels, thereby blocking neuronal transmission. In vivo, shows analgesic activity (ED(50) is 1.42 mg/kg) and antitumor activity against Ehrlich ascites tumor and S-180 fibrosarcoma models. The polypeptide is Neurotoxin BmK AGAP-SYPU2 (Olivierus martensii (Manchurian scorpion)).